We begin with the raw amino-acid sequence, 1172 residues long: NACHT, LRR and PYD domains-containing protein 1b allele 3 (1172 aa).

A disordered region spans residues Met1–Asp22. The NACHT domain maps to Gln126–Leu435. Residue Gly132–Ser139 coordinates ATP. LRR repeat units lie at residues Asn627–Cys647 and Ser684–Cys704. The tract at residues Phe789–Phe922 is ZU5. The region spanning Phe789–Gln1072 is the FIIND domain. A UPA region spans residues Ser923–Gln1072. The region spanning His1082 to Ser1165 is the CARD domain.

It belongs to the NLRP family. In contrast to allele 1 and 2, not able to mediate autocatalytic cleavage. As to expression, expressed in macrophages.

It localises to the cytoplasm. It is found in the cytosol. In contrast to allele 1, does not undergo autocatalytic cleavage within the FIIND domain and its mode of activation remains unclear. In contrast to alleles 1 and 2, allele 3 is not activated by Val-boroPro (Talabostat, PT-100). Not activated by cleavage by B.anthracis lethal toxin (LT) endopeptidase. Not activated by metabolic inhibitors, such as 2-deoxy-D-glucose and sodium azide. In terms of biological role, may act as the sensor component of the Nlrp1b inflammasome, which mediates inflammasome activation in response to various pathogen-associated signals, leading to subsequent pyroptosis. Inflammasomes are supramolecular complexes that assemble in the cytosol in response to pathogens and other damage-associated signals and play critical roles in innate immunity and inflammation. May act as a recognition receptor (PRR), which recognizes specific pathogens and other damage-associated signals and forms an inflammasome complex: the inflammasome directly recruits pro-caspase-1 (proCASP1) independently of PYCARD/ASC and promotes caspase-1 (CASP1) activation, which subsequently cleaves and activates inflammatory cytokines IL1B and IL18 and gasdermin-D (GSDMD), leading to pyroptosis. In the absence of GSDMD expression, the Nlrp1b inflammasome is able to recruit and activate CASP8, leading to activation of gasdermin-E (GSDME). Contrary to Nlrp1b allele 1, allele 3 is not activated by Bacillus anthracis lethal toxin. The absence of autocatalytic cleavage within the FIIND domain, which regulates activation in other alleles, suggests that allele 3 may be non-functional. The chain is NACHT, LRR and PYD domains-containing protein 1b allele 3 from Mus musculus (Mouse).